The chain runs to 281 residues: Predicted GPI-anchored protein 39 (281 aa).

The N-terminal stretch at 1–18 is a signal peptide; that stretch reads MKATTFTLLLSIATAINA. 2 disordered regions span residues 52–94 and 106–227; these read HHHG…SASV and VSVS…SSSE. Composition is skewed to low complexity over residues 69–94, 106–158, 167–203, and 210–227; these read SSSS…SASV, VSVS…STTD, ATDS…IEET, and SVPS…SSSE. N-linked (GlcNAc...) asparagine glycosylation is present at Asn-150. 4 N-linked (GlcNAc...) asparagine glycosylation sites follow: Asn-239, Asn-246, Asn-249, and Asn-252. A lipid anchor (GPI-anchor amidated serine) is attached at Ser-256. A propeptide spans 257–281 (removed in mature form); it reads ANFAIQYGTDYGVAVVAAIVGALLI.

Its subcellular location is the cell membrane. This is Predicted GPI-anchored protein 39 (PGA39) from Candida albicans (strain SC5314 / ATCC MYA-2876) (Yeast).